A 382-amino-acid polypeptide reads, in one-letter code: DnaJ homolog dnj-20 (382 aa).

The first 21 residues, 1–21, serve as a signal peptide directing secretion; the sequence is MRILNVSLLVLTAFLVDFVEC. Residues 24-89 enclose the J domain; sequence DFYKILGVSK…EKRAMYDRHG (66 aa).

The protein is DnaJ homolog dnj-20 of Caenorhabditis briggsae.